A 278-amino-acid chain; its full sequence is Sulfur carrier protein FdhD (278 aa).

The Cysteine persulfide intermediate role is filled by Cys113. 251 to 256 (FCRNGR) is a binding site for Mo-bis(molybdopterin guanine dinucleotide).

This sequence belongs to the FdhD family.

The protein localises to the cytoplasm. In terms of biological role, required for formate dehydrogenase (FDH) activity. Acts as a sulfur carrier protein that transfers sulfur from IscS to the molybdenum cofactor prior to its insertion into FDH. This chain is Sulfur carrier protein FdhD, found in Shewanella oneidensis (strain ATCC 700550 / JCM 31522 / CIP 106686 / LMG 19005 / NCIMB 14063 / MR-1).